Here is a 152-residue protein sequence, read N- to C-terminus: Large ribosomal subunit protein eL29 (152 aa).

Basic residues predominate over residues 1 to 26; sequence MAKSKNHTTHNQSRKWHRNGIKKPRS. A disordered region spans residues 1–32; sequence MAKSKNHTTHNQSRKWHRNGIKKPRSQRYESL. The residue at position 5 (Lys5) is an N6-methyllysine. Residue Ser31 is modified to Phosphoserine. N6-acetyllysine is present on Lys33. Positions 119–152 are disordered; it reads CRPKSQAKASTKAKPPAAAAPAAKGAQAPTKAPE. Low complexity predominate over residues 121–152; sequence PKSQAKASTKAKPPAAAAPAAKGAQAPTKAPE.

Belongs to the eukaryotic ribosomal protein eL29 family. Component of the large ribosomal subunit.

The protein resides in the cytoplasm. Its function is as follows. Component of the large ribosomal subunit. The ribosome is a large ribonucleoprotein complex responsible for the synthesis of proteins in the cell. This chain is Large ribosomal subunit protein eL29 (RPL29), found in Bos taurus (Bovine).